The primary structure comprises 149 residues: Nucleoside diphosphate kinase (149 aa).

K9, F57, R85, T91, R102, and N112 together coordinate ATP. H115 (pros-phosphohistidine intermediate) is an active-site residue.

The protein belongs to the NDK family. In terms of assembly, homotetramer. Requires Mg(2+) as cofactor.

Its subcellular location is the cytoplasm. The catalysed reaction is a 2'-deoxyribonucleoside 5'-diphosphate + ATP = a 2'-deoxyribonucleoside 5'-triphosphate + ADP. The enzyme catalyses a ribonucleoside 5'-diphosphate + ATP = a ribonucleoside 5'-triphosphate + ADP. Major role in the synthesis of nucleoside triphosphates other than ATP. The ATP gamma phosphate is transferred to the NDP beta phosphate via a ping-pong mechanism, using a phosphorylated active-site intermediate. The polypeptide is Nucleoside diphosphate kinase (Microcystis aeruginosa (strain NIES-843 / IAM M-2473)).